The chain runs to 362 residues: Peptide chain release factor 2 (362 aa).

Q250 is subject to N5-methylglutamine.

It belongs to the prokaryotic/mitochondrial release factor family. Post-translationally, methylated by PrmC. Methylation increases the termination efficiency of RF2.

Its subcellular location is the cytoplasm. Functionally, peptide chain release factor 2 directs the termination of translation in response to the peptide chain termination codons UGA and UAA. The sequence is that of Peptide chain release factor 2 from Clostridium perfringens (strain ATCC 13124 / DSM 756 / JCM 1290 / NCIMB 6125 / NCTC 8237 / Type A).